Reading from the N-terminus, the 293-residue chain is Decaprenyl diphosphate synthase (293 aa).

The interval 1-24 (MATTRGKKTYPQLPPAPDDYPTFP) is disordered. Asp-73 is an active-site residue. Mg(2+) is bound at residue Asp-73. Substrate is bound by residues 74 to 77 (GNGR), Trp-78, Arg-86, His-90, and 118 to 120 (STE). Asn-121 serves as the catalytic Proton acceptor. Substrate contacts are provided by residues Trp-122, Arg-124, Arg-241, and 247-249 (RAS). Glu-260 provides a ligand contact to Mg(2+).

This sequence belongs to the UPP synthase family. In terms of assembly, homodimer. It depends on Mg(2+) as a cofactor.

It localises to the cell membrane. The enzyme catalyses (2Z,6E)-farnesyl diphosphate + 7 isopentenyl diphosphate = (2Z,6Z,10Z,14Z,18Z,22Z,26Z,30Z,34E)-decaprenyl diphosphate + 7 diphosphate. It catalyses the reaction n isopentenyl diphosphate + (2E,6E)-farnesyl diphosphate = a di-trans,poly-cis-polyprenyl diphosphate + n diphosphate. Catalyzes the sequential condensation of isopentenyl diphosphate (IPP) in the cis configuration with (2Z,6E)-farnesyl diphosphate (Z-FPP or EZ-FPP) generating the 50 carbon product trans,polycis-decaprenyl diphosphate. When (2E,6E)-farnesyl diphosphate (E-FPP or EE-FPP) is used in vitro, both primary products decaprenyl diphosphate and heptaprenyl diphosphate are synthesized. It is probably due to the fact that M.smegmatis synthesizes both (2E,6E,10E)-geranylgeranyl diphosphate (EEE-GGPP) and (2E,6E,10Z)-geranylgeranyl diphosphate (EEZ-GGPP). Can also accept many different allylic substrates, including E-geranyl diphosphate (E-GPP), neryl diphosphate (NPP), and all-trans-geranyl-geranyl diphosphate. The sequence is that of Decaprenyl diphosphate synthase (uppS) from Mycolicibacterium smegmatis (strain ATCC 700084 / mc(2)155) (Mycobacterium smegmatis).